The chain runs to 338 residues: Transcription factor AP-4 (338 aa).

The bHLH domain occupies 48-99 (IRREIANSNERRRMQSINAGFQSLKTLIPHTDGEKLSKAAILQQTAEYIFSL). A leucine-zipper 1 region spans residues 100-120 (EQEKTRLLQQNTQLKRFIQEL). A disordered region spans residues 118–141 (QELSGSSPKRRRAEDKDEGIGSPD). Phosphoserine occurs at positions 123, 124, and 139. Residue K147 forms a Glycyl lysine isopeptide (Lys-Gly) (interchain with G-Cter in SUMO2) linkage. A leucine-zipper 2 region spans residues 151–179 (LRREMIELRQQLDKERSVRMMLEEQVRSL). Glycyl lysine isopeptide (Lys-Gly) (interchain with G-Cter in SUMO2) cross-links involve residues K187, K189, and K285. Residues 283–294 (QEKQELEEEQRR) are compositionally biased toward basic and acidic residues. A disordered region spans residues 283–338 (QEKQELEEEQRRAVIVKPVRSCPEAPTSDTASDSEASDSDAMDQSREEPSGDGELP).

Efficient DNA binding requires dimerization with another bHLH protein. Homodimer.

The protein localises to the nucleus. In terms of biological role, transcription factor that activates both viral and cellular genes by binding to the symmetrical DNA sequence 5'-CAGCTG-3'. In Homo sapiens (Human), this protein is Transcription factor AP-4 (TFAP4).